The following is a 550-amino-acid chain: Complement control protein (550 aa).

The first 19 residues, 1–19 (MAFLRQTLWILWTFTMVIG), serve as a signal peptide directing secretion. Sushi domains are found at residues 23 to 83 (EKCS…TCNK), 84 to 150 (KSCP…FCEK), 151 to 209 (EKCH…TCEL), and 210 to 268 (AGCK…KCVL). 8 disulfide bridges follow: Cys25/Cys68, Cys53/Cys81, Cys86/Cys131, Cys116/Cys148, Cys153/Cys194, Cys180/Cys207, Cys212/Cys254, and Cys240/Cys266. Residues Asn63 and Asn111 are each glycosylated (N-linked (GlcNAc...) asparagine; by host). N-linked (GlcNAc...) asparagine; by host glycosylation is present at Asn197. N-linked (GlcNAc...) asparagine; by host glycosylation is found at Asn255, Asn275, and Asn299. Positions 269–338 (EDIDDPNNSN…TSEGFNETTT (70 aa)) are disordered. Polar residues-rich tracts occupy residues 288 to 302 (EKPN…NYTE) and 312 to 321 (TAATCDTNCE). Residues Asn334, Asn371, Asn374, and Asn378 are each glycosylated (N-linked (GlcNAc...) asparagine; by host). 2 disordered regions span residues 387 to 408 (TPTS…NYNT) and 420 to 516 (IEEG…RPPA). The segment covering 424–440 (PSNSTTSEKATASTLSH) has biased composition (polar residues). N-linked (GlcNAc...) asparagine; by host glycans are attached at residues Asn426, Asn445, Asn455, and Asn483. Residues 450 to 476 (IYTTLNKTTQLPSTNKPTNSQAKSSTK) show a composition bias toward polar residues. Positions 484-495 (KTTSNPAISLTD) are enriched in polar residues. The chain crosses the membrane as a helical span at residues 528–548 (IGLLTAVALTCGLITLFHYLF).

The protein resides in the host membrane. It is found in the virion membrane. Inhibits the complement component of the host innate immune response. Regulates host C3 convertases, accelerating their decay, and acts as a cofactor for factor I degradation of C4b and C3b. Also binds heparin, and therefore may play two distinct roles when incorporated in virion membranes: immune evasion and host cell binding. This is Complement control protein (ORF4) from Human herpesvirus 8 type P (isolate GK18) (HHV-8).